Here is a 178-residue protein sequence, read N- to C-terminus: MKVKTIMLLFQILAISTIKSADVPNRYIQENVAVRGKATQSTLPSGAGAVLSLPGFAIDGNRDSDFSHGSCSHTTNSPNPWWRVDLLQLYTITSVTITNRGDCCGERISGARILIGNSLENNGINNPACSVIGSMETGETRTFHCPQPMIGRYVTVYLPKTEVLQLCEVEVNALLPVN.

A signal peptide spans 1-20 (MKVKTIMLLFQILAISTIKS). The segment at 29 to 178 (QENVAVRGKA…VEVNALLPVN (150 aa)) is F5/8 type C-like. Ca(2+) is bound by residues Asp59, Asn61, and Ser70. 3 cysteine pairs are disulfide-bonded: Cys71–Cys167, Cys103–Cys104, and Cys129–Cys145. Alpha-L-fucose-binding residues include His73 and Arg100. A Cell attachment site motif is present at residues 100-102 (RGD). Arg107 is an alpha-L-fucose binding site. Residues Cys167 and Glu168 each coordinate Ca(2+).

It belongs to the fucolectin family. As to quaternary structure, homotrimer. As to expression, parenchymal hepatocytes.

The protein localises to the secreted. Its subcellular location is the extracellular space. In terms of biological role, acts as a defensive agent. Recognizes blood group fucosylated oligosaccharides including A, B, H and Lewis B-type antigens. Does not recognize Lewis A antigen and has low affinity for monovalent haptens. The protein is Fucolectin-1 of Anguilla japonica (Japanese eel).